Consider the following 584-residue polypeptide: Putative sel1-like repeat-containing protein L18 (584 aa).

Sel1-like repeat units lie at residues 132–167, 168–203, 204–237, 238–273, 274–309, and 316–351; these read SMAQ…DQNN, KYGL…CQNF, SKAQ…NQNH, SSAQ…SQGL, NSAK…YDDG, and EVAM…NTKN.

In Acanthamoeba polyphaga (Amoeba), this protein is Putative sel1-like repeat-containing protein L18.